The following is a 108-amino-acid chain: Replication restart protein PriB (108 aa).

In terms of domain architecture, SSB spans 8-108; sequence VDNRFSLIGK…LHAEQIEFIE (101 aa).

Belongs to the PriB family. In terms of assembly, homodimer. Interacts with PriA and DnaT. Component of the replication restart primosome. Primosome assembly occurs via a 'hand-off' mechanism. PriA binds to replication forks, subsequently PriB then DnaT bind; DnaT then displaces ssDNA to generate the helicase loading substrate.

In terms of biological role, involved in the restart of stalled replication forks, which reloads the replicative helicase on sites other than the origin of replication; the PriA-PriB pathway is the major replication restart pathway. During primosome assembly it facilitates complex formation between PriA and DnaT on DNA; stabilizes PriA on DNA. Stimulates the DNA unwinding activity of PriA helicase. The chain is Replication restart protein PriB from Histophilus somni (strain 129Pt) (Haemophilus somnus).